We begin with the raw amino-acid sequence, 391 residues long: Apolipoprotein A-IV (391 aa).

The N-terminal stretch at 1-20 (MFLKAVVLTVALVAITGTQA) is a signal peptide. 13 tandem repeats follow at residues 33–54 (DYFT…KTDV), 60–81 (TLFQ…NKLV), 82–103 (PFAV…EEIQ), 115–136 (PHAN…EHLR), 137–158 (PYAT…RQLT), 159–180 (PYIQ…SSMV), 181–202 (PFAN…GQLT), 203–224 (PRAN…SRLA), 225–246 (PLAE…FQMK), 247–268 (KNAE…KNLA), 269–286 (PLVE…EGLQ), 287–308 (KSLE…RAVE), and 309–330 (PLGD…QQLG). Residues 33 to 330 (DYFTQLSNNA…QMEKFRQQLG (298 aa)) form a 13 X 22 AA approximate tandem repeats region. Serine 333 is subject to Phosphoserine. The interval 354–391 (FMSTLQKKGSPDQPLALPLPEQVQEQVQEQVQPKPLES) is disordered. A compositionally biased stretch (low complexity) spans 371 to 391 (PLPEQVQEQVQEQVQPKPLES).

This sequence belongs to the apolipoprotein A1/A4/E family. As to quaternary structure, homodimer. As to expression, secreted in plasma.

It is found in the secreted. Functionally, may have a role in chylomicrons and VLDL secretion and catabolism. Required for efficient activation of lipoprotein lipase by ApoC-II; potent activator of LCAT. Apoa-IV is a major component of HDL and chylomicrons. This is Apolipoprotein A-IV (Apoa4) from Rattus norvegicus (Rat).